The following is a 757-amino-acid chain: E3 ubiquitin-protein ligase SMURF1 (757 aa).

In terms of domain architecture, C2 spans 1–120 (MSNPGTRRNG…TGYQRLDLCK (120 aa)). The tract at residues 193–237 (GNCRFVESPSQDQRLQAQRLRNPDVRGSLQTPQNRPHGHQSPELP) is disordered. A Phosphoserine modification is found at Ser-200. WW domains are found at residues 234–267 (PELPEGYEQRTTVQGQVYFLHTQTGVSTWHDPRI) and 306–339 (GPLPPGWEVRSTVSGRIYFVDHNNRTTQFTDPRL). Glycyl lysine isopeptide (Lys-Gly) (interchain with G-Cter in ubiquitin) cross-links involve residues Lys-381 and Lys-383. Residues 420–757 (RPKDLKKRLM…VEETCGFAVE (338 aa)) enclose the HECT domain. Cys-725 (glycyl thioester intermediate) is an active-site residue.

In terms of assembly, interacts with TRAF4. Interacts (via HECT domain) with FBXL15 (via LRR repeats). Interacts with SMAD7 and TGFBR1; SMAD7 recruits SMURF1 to TGFBR1 and regulates TGF-beta receptor degradation. Interacts with MAVS; the interaction is mediated by NDFIP1. Auto-ubiquitinated in presence of NDFIP1. Ubiquitinated by the SCF(FBXL15) complex at Lys-381 and Lys-383, leading to its degradation by the proteasome. Lys-383 is the primary ubiquitination site. In terms of tissue distribution, expressed in melanocytes.

It is found in the cytoplasm. The protein resides in the cell membrane. It catalyses the reaction S-ubiquitinyl-[E2 ubiquitin-conjugating enzyme]-L-cysteine + [acceptor protein]-L-lysine = [E2 ubiquitin-conjugating enzyme]-L-cysteine + N(6)-ubiquitinyl-[acceptor protein]-L-lysine.. The protein operates within protein modification; protein ubiquitination. In terms of biological role, E3 ubiquitin-protein ligase that acts as a negative regulator of BMP signaling pathway. Mediates ubiquitination and degradation of SMAD1 and SMAD5, 2 receptor-regulated SMADs specific for the BMP pathway. Promotes ubiquitination and subsequent proteasomal degradation of TRAF family members and RHOA. Promotes ubiquitination and subsequent proteasomal degradation of MAVS. Acts as an antagonist of TGF-beta signaling by ubiquitinating TGFBR1 and targeting it for degradation. Plays a role in dendrite formation by melanocytes. This chain is E3 ubiquitin-protein ligase SMURF1 (SMURF1), found in Homo sapiens (Human).